The following is a 363-amino-acid chain: Elongation factor Tu, chloroplastic (363 aa).

The region spanning 1–189 is the tr-type G domain; sequence TLTAAITMAL…NVDEYIPTPE (189 aa). Residues 55-59 and 110-113 contribute to the GTP site; these read DCPGH and NKED.

It belongs to the TRAFAC class translation factor GTPase superfamily. Classic translation factor GTPase family. EF-Tu/EF-1A subfamily.

The protein localises to the plastid. The protein resides in the chloroplast. It carries out the reaction GTP + H2O = GDP + phosphate + H(+). GTP hydrolase that promotes the GTP-dependent binding of aminoacyl-tRNA to the A-site of ribosomes during protein biosynthesis. The protein is Elongation factor Tu, chloroplastic (tufA) of Gymnochlora stellata.